A 677-amino-acid polypeptide reads, in one-letter code: Methionine--tRNA ligase (677 aa).

Residues 15–25 (PYANGSIHLGH) carry the 'HIGH' region motif. Positions 146, 149, 159, and 162 each coordinate Zn(2+). The 'KMSKS' region motif lies at 333–337 (KMSKS). K336 serves as a coordination point for ATP. One can recognise a tRNA-binding domain in the interval 575 to 677 (DFAKVDLRVA…AGAKPGHQVK (103 aa)).

It belongs to the class-I aminoacyl-tRNA synthetase family. MetG type 1 subfamily. Homodimer. Requires Zn(2+) as cofactor.

Its subcellular location is the cytoplasm. The catalysed reaction is tRNA(Met) + L-methionine + ATP = L-methionyl-tRNA(Met) + AMP + diphosphate. Is required not only for elongation of protein synthesis but also for the initiation of all mRNA translation through initiator tRNA(fMet) aminoacylation. In Shigella flexneri serotype 5b (strain 8401), this protein is Methionine--tRNA ligase.